A 665-amino-acid chain; its full sequence is Protein kinase domain-containing protein ppk2 (665 aa).

Disordered regions lie at residues 42 to 63 (PNDS…KKKF), 82 to 152 (GNST…LSRS), 187 to 217 (LNSQ…SSMN), and 286 to 343 (AESL…VGHP). The span at 82–104 (GNSTRSPPFHLQNQKSNGQSEVW) shows a compositional bias: polar residues. 2 stretches are compositionally biased toward low complexity: residues 137–152 (SLSR…LSRS) and 206–217 (TNRLSSSTSSMN). Residues 294-316 (SATTIQQGDVSSYPLSRSVSTPV) show a composition bias toward polar residues. Serine 358 bears the Phosphoserine mark. One can recognise a Protein kinase domain in the interval 388–637 (YTDFTKICQQ…NMLLETSSFL (250 aa)). Residues 394–402 (ICQQDTVGT) and lysine 417 each bind ATP.

The protein localises to the cytoplasm. In Schizosaccharomyces pombe (strain 972 / ATCC 24843) (Fission yeast), this protein is Protein kinase domain-containing protein ppk2 (ppk2).